A 468-amino-acid polypeptide reads, in one-letter code: GDNF family receptor alpha-1 (468 aa).

Residues 1–24 form the signal peptide; that stretch reads MFLATLYFVLPLLDLLMSAEVSGG. Tandem repeats lie at residues 25–113, 150–238, and 239–342. An intrachain disulfide couples Cys-36 to Cys-42. N-linked (GlcNAc...) asparagine glycosylation is present at Asn-59. Disulfide bonds link Cys-154–Cys-214, Cys-161–Cys-167, Cys-178–Cys-192, Cys-187–Cys-233, Cys-216–Cys-221, Cys-243–Cys-313, Cys-250–Cys-256, Cys-267–Cys-285, Cys-277–Cys-337, and Cys-315–Cys-325. N-linked (GlcNAc...) asparagine glycosylation is found at Asn-347 and Asn-406. Ser-430 is lipidated: GPI-anchor amidated serine. The propeptide at 431 to 468 is removed in mature form; that stretch reads HITTKSMAAPPSCGLSSLPVMVFTALAALLSVSLAETS.

It belongs to the GDNFR family. As to quaternary structure, interacts with GDNF ligand and RET: forms a 2:2:2 ternary complex composed of GDNF ligand, GFRA1 and RET receptor. Interacts with SORL1, either alone or in complex with GDNF. Interaction between SORL1 and GFRA1 leads to GFRA1 internalization, but not degradation. Expressed in the brain, in hippocampal neurons (at protein level). Isoform 1 and isoform 2 are expressed in heart, brain, lung, liver, kidney and testis.

The protein localises to the cell membrane. The protein resides in the golgi apparatus. It localises to the trans-Golgi network. Its subcellular location is the endosome. It is found in the multivesicular body. Functionally, coreceptor for GDNF, a neurotrophic factor that enhances survival and morphological differentiation of dopaminergic neurons and increases their high-affinity dopamine uptake. GDNF-binding leads to autophosphorylation and activation of the RET receptor. The sequence is that of GDNF family receptor alpha-1 (Gfra1) from Mus musculus (Mouse).